The chain runs to 309 residues: 5-formyl-3-hydroxy-2-methylpyridine 4-carboxylate 5-dehydrogenase (309 aa).

Residues 12-13 (TM), aspartate 32, 87-89 (VPE), and lysine 94 each bind NAD(+).

It belongs to the 3-hydroxyacyl-CoA dehydrogenase family. Homodimer.

The catalysed reaction is 5-formyl-3-hydroxy-2-methylpyridine-4-carboxylate + NAD(+) + H2O = 5-hydroxy-6-methylpyridine-3,4-dicarboxylate + NADH + 2 H(+). It catalyses the reaction 5-formyl-3-hydroxy-2-methylpyridine-4-carboxylate + NADH + H(+) = 4-pyridoxate + NAD(+). It participates in cofactor degradation; B6 vitamer degradation. Functionally, involved in the degradation of pyridoxine (vitamin B(6)). Catalyzes the oxidation of 5-formyl-3-hydroxy-2-methylpyridine-4-carboxylate (FHMPC) by NAD(+) to 5-hydroxy-6-methylpyridine-3,4-dicarboxylate (HMPDC). Can also catalyze the reduction of FHMPC by NADH to 4-pyridoxic acid. This chain is 5-formyl-3-hydroxy-2-methylpyridine 4-carboxylate 5-dehydrogenase, found in Mesorhizobium japonicum (strain LMG 29417 / CECT 9101 / MAFF 303099) (Mesorhizobium loti (strain MAFF 303099)).